Reading from the N-terminus, the 440-residue chain is Chromosome partition protein MukF (440 aa).

The segment at L208–I236 is leucine-zipper.

This sequence belongs to the MukF family. As to quaternary structure, interacts, and probably forms a ternary complex, with MukE and MukB via its C-terminal region. The complex formation is stimulated by calcium or magnesium. It is required for an interaction between MukE and MukB.

Its subcellular location is the cytoplasm. The protein localises to the nucleoid. In terms of biological role, involved in chromosome condensation, segregation and cell cycle progression. May participate in facilitating chromosome segregation by condensation DNA from both sides of a centrally located replisome during cell division. Not required for mini-F plasmid partitioning. Probably acts via its interaction with MukB and MukE. Overexpression results in anucleate cells. It has a calcium binding activity. This chain is Chromosome partition protein MukF, found in Salmonella agona (strain SL483).